A 209-amino-acid polypeptide reads, in one-letter code: Large ribosomal subunit protein uL3 (209 aa).

Residues 128–163 are disordered; that stretch reads AHRGPMTHGSKFHRAVGSMGASSDPSRTFKNKRMPG.

Belongs to the universal ribosomal protein uL3 family. As to quaternary structure, part of the 50S ribosomal subunit. Forms a cluster with proteins L14 and L19.

One of the primary rRNA binding proteins, it binds directly near the 3'-end of the 23S rRNA, where it nucleates assembly of the 50S subunit. The chain is Large ribosomal subunit protein uL3 from Clostridium botulinum (strain 657 / Type Ba4).